The chain runs to 354 residues: Src kinase-associated phosphoprotein 1 (354 aa).

The region spanning 107-210 (NVIKQGYLEK…WVDQISFLLK (104 aa)) is the PH domain. 2 positions are modified to phosphotyrosine: Y142 and Y236. 2 positions are modified to phosphotyrosine; by FYN: Y267 and Y290. The interaction with FYB1 stretch occupies residues 285 to 290 (RRRVDY). Positions 289–350 (DYADYYQGLW…PKDYLTTAFE (62 aa)) constitute an SH3 domain.

This sequence belongs to the SKAP family. In terms of assembly, homodimer. Interacts with FYN. Interacts with PTPRC. Interacts with GRB2 when phosphorylated on Tyr-267. Interacts with FYB1, which is required for SKAP2 protein stability. Part of a complex consisting of SKAP1, FYB1 and CLNK. Interacts with RASGRP1. Interacts with FYB2. Post-translationally, phosphorylated on tyrosines. Phosphorylation by FYN on Tyr-267 is required for GRB2 interaction. Phosphorylation by FYN on Tyr-290 abolishes interaction with FYB1. Tyr-236 is dephosphorylated by PTPRC. Expressed in mast cells (at protein level).

Its subcellular location is the cytoplasm. The protein localises to the nucleus. It is found in the cell membrane. Its function is as follows. Positively regulates T-cell receptor signaling by enhancing the MAP kinase pathway. Required for optimal conjugation between T-cells and antigen-presenting cells by promoting the clustering of integrin ITGAL on the surface of T-cells. May be involved in high affinity immunoglobulin epsilon receptor signaling in mast cells. The sequence is that of Src kinase-associated phosphoprotein 1 (Skap1) from Rattus norvegicus (Rat).